The following is a 416-amino-acid chain: Calreticulin (416 aa).

The N-terminal stretch at 1 to 17 is a signal peptide; the sequence is MLLSVPLLLGLLGLAAA. Residues 18–197 form an N-domain region; it reads DPAIYFKEQF…NSQVESGSLE (180 aa). Residue Gln26 participates in Ca(2+) binding. At Lys48 the chain carries N6-acetyllysine. Ca(2+)-binding residues include Lys62 and Lys64. Lys64 carries the N6-(2-hydroxyisobutyryl)lysine modification. The cysteines at positions 105 and 137 are disulfide-linked. Residues Tyr109, Lys111, Tyr128, and Asp135 each contribute to the an alpha-D-glucoside site. An N6-acetyllysine modification is found at Lys159. One copy of the 1-1 repeat lies at 191-202; it reads VESGSLEDDWDF. The tract at residues 191-255 is 4 X approximate repeats; sequence VESGSLEDDW…DAKKPEDWDE (65 aa). Positions 193 to 277 are disordered; the sequence is SGSLEDDWDF…NPEYKGEWKP (85 aa). The segment at 198-308 is P-domain; it reads DDWDFLPPKK…YSPDANIYAY (111 aa). Residues 207-251 are compositionally biased toward basic and acidic residues; it reads KIKDPDAAKPEDWDERAKIDDPTDSKPEDWDKPEHIPDPDAKKPE. Lys209 is modified (N6-acetyllysine). Tandem repeats lie at residues 210–221, 227–238, 244–255, 259–269, 273–283, and 287–297. The interaction with PPIB stretch occupies residues 237 to 270; that stretch reads DKPEHIPDPDAKKPEDWDEEMDGEWEPPVIQNPE. Residues 252-261 show a composition bias toward acidic residues; that stretch reads DWDEEMDGEW. The 3 X approximate repeats stretch occupies residues 259-297; that stretch reads GEWEPPVIQNPEYKGEWKPRQIDNPDYKGTWIHPEIDNP. The segment at 309-416 is C-domain; that stretch reads DSFAVLGLDL…ESPGQAKDEL (108 aa). Residue Asp317 participates in an alpha-D-glucoside binding. Asp328 lines the Ca(2+) pocket. A disordered region spans residues 350-416; it reads TKAAEKQMKD…ESPGQAKDEL (67 aa). Over residues 352–379 the composition is skewed to basic and acidic residues; sequence AAEKQMKDKQDEEQRLKEEEEDKKRKEE. Positions 380–408 are enriched in acidic residues; that stretch reads EEAEDKEDDDDRDEDEDEEDEKEEDEEES. The short motif at 413 to 416 is the Prevents secretion from ER element; it reads KDEL.

This sequence belongs to the calreticulin family. In terms of assembly, monomer. Interacts with GABARAP, NR3C1, PDIA3/ERp57 and TRIM21. Interacts (via P-domain) with PDIA5. Interacts with PPIB. Interacts with SPACA9. Component of an EIF2 complex at least composed of CELF1/CUGBP1, CALR, CALR3, EIF2S1, EIF2S2, HSP90B1 and HSPA5. Interacts with CLCC1.

It is found in the endoplasmic reticulum lumen. The protein resides in the cytoplasm. Its subcellular location is the cytosol. It localises to the cytolytic granule. The protein localises to the secreted. It is found in the extracellular space. The protein resides in the extracellular matrix. Its subcellular location is the cell surface. It localises to the sarcoplasmic reticulum lumen. The protein localises to the cytoplasmic vesicle. It is found in the secretory vesicle. The protein resides in the cortical granule. Functionally, calcium-binding chaperone that promotes folding, oligomeric assembly and quality control in the endoplasmic reticulum (ER) via the calreticulin/calnexin cycle. This lectin interacts transiently with almost all of the monoglucosylated glycoproteins that are synthesized in the ER. Interacts with the DNA-binding domain of NR3C1 and mediates its nuclear export. Involved in maternal gene expression regulation. May participate in oocyte maturation via the regulation of calcium homeostasis. Present in the cortical granules of non-activated oocytes, is exocytosed during the cortical reaction in response to oocyte activation and might participate in the block to polyspermy. This is Calreticulin (Calr) from Mus musculus (Mouse).